Reading from the N-terminus, the 196-residue chain is Peptidyl-tRNA hydrolase (196 aa).

H15 contacts tRNA. Residue H20 is the Proton acceptor of the active site. TRNA-binding residues include Y66, N68, and N114.

The protein belongs to the PTH family. As to quaternary structure, monomer.

It localises to the cytoplasm. It carries out the reaction an N-acyl-L-alpha-aminoacyl-tRNA + H2O = an N-acyl-L-amino acid + a tRNA + H(+). Functionally, hydrolyzes ribosome-free peptidyl-tRNAs (with 1 or more amino acids incorporated), which drop off the ribosome during protein synthesis, or as a result of ribosome stalling. Its function is as follows. Catalyzes the release of premature peptidyl moieties from peptidyl-tRNA molecules trapped in stalled 50S ribosomal subunits, and thus maintains levels of free tRNAs and 50S ribosomes. The sequence is that of Peptidyl-tRNA hydrolase from Polynucleobacter necessarius subsp. necessarius (strain STIR1).